The following is a 782-amino-acid chain: Endonuclease MutS2 (782 aa).

Residue 336 to 343 (GPNTGGKT) coordinates ATP. The 76-residue stretch at 707-782 (LDLRGYRYED…GFGVTVATLK (76 aa)) folds into the Smr domain.

Belongs to the DNA mismatch repair MutS family. MutS2 subfamily. In terms of assembly, homodimer. Binds to stalled ribosomes, contacting rRNA.

In terms of biological role, endonuclease that is involved in the suppression of homologous recombination and thus may have a key role in the control of bacterial genetic diversity. Functionally, acts as a ribosome collision sensor, splitting the ribosome into its 2 subunits. Detects stalled/collided 70S ribosomes which it binds and splits by an ATP-hydrolysis driven conformational change. Acts upstream of the ribosome quality control system (RQC), a ribosome-associated complex that mediates the extraction of incompletely synthesized nascent chains from stalled ribosomes and their subsequent degradation. Probably generates substrates for RQC. The protein is Endonuclease MutS2 of Staphylococcus aureus (strain COL).